Here is a 381-residue protein sequence, read N- to C-terminus: Homoserine O-succinyltransferase (381 aa).

The AB hydrolase-1 domain occupies 45–360 (NAVLVCHALN…PHGHDAFLLD (316 aa)). The active-site Nucleophile is the Ser-151. A substrate-binding site is contributed by Arg-221. Active-site residues include Asp-321 and His-354. Residue Asp-355 coordinates substrate.

Belongs to the AB hydrolase superfamily. MetX family. In terms of assembly, homodimer.

The protein localises to the cytoplasm. It catalyses the reaction L-homoserine + succinyl-CoA = O-succinyl-L-homoserine + CoA. The protein operates within amino-acid biosynthesis; L-methionine biosynthesis via de novo pathway; O-succinyl-L-homoserine from L-homoserine: step 1/1. Functionally, transfers a succinyl group from succinyl-CoA to L-homoserine, forming succinyl-L-homoserine. The protein is Homoserine O-succinyltransferase of Paraburkholderia phymatum (strain DSM 17167 / CIP 108236 / LMG 21445 / STM815) (Burkholderia phymatum).